Here is a 457-residue protein sequence, read N- to C-terminus: Embryogenesis-associated protein EMB8 (457 aa).

Residues 39–59 (KKPAAGACEEQDELTSGSAAR) form a disordered region. The region spanning 151–391 (PVLILLPGLT…LVVTPNGGHL (241 aa)) is the AB hydrolase-1 domain. Residues S231, D361, and H390 each act as charge relay system in the active site. Residues 438 to 447 (VDSVHTRETN) are compositionally biased toward basic and acidic residues. The segment at 438 to 457 (VDSVHTRETNNYKSPIENVN) is disordered. A compositionally biased stretch (polar residues) spans 448-457 (NYKSPIENVN).

Belongs to the AB hydrolase superfamily. AB hydrolase 4 family.

This Picea glauca (White spruce) protein is Embryogenesis-associated protein EMB8 (EMB8).